Here is a 503-residue protein sequence, read N- to C-terminus: Aromatase (503 aa).

3 helical membrane-spanning segments follow: residues 19–39 (EVAP…LLVW), 51–71 (GYFL…MGIG), and 303–323 (MLIA…FLIA). Residues Asp309 and Met374 each contribute to the substrate site. Cys437 is a heme binding site.

Belongs to the cytochrome P450 family. Heme is required as a cofactor.

It is found in the endoplasmic reticulum membrane. It localises to the microsome membrane. It carries out the reaction testosterone + 3 reduced [NADPH--hemoprotein reductase] + 3 O2 = 17beta-estradiol + formate + 3 oxidized [NADPH--hemoprotein reductase] + 4 H2O + 4 H(+). The enzyme catalyses androst-4-ene-3,17-dione + 3 reduced [NADPH--hemoprotein reductase] + 3 O2 = estrone + formate + 3 oxidized [NADPH--hemoprotein reductase] + 4 H2O + 4 H(+). It catalyses the reaction androst-4-ene-3,17-dione + reduced [NADPH--hemoprotein reductase] + O2 = 19-hydroxyandrost-4-ene-3,17-dione + oxidized [NADPH--hemoprotein reductase] + H2O + H(+). The catalysed reaction is 19-hydroxyandrost-4-ene-3,17-dione + reduced [NADPH--hemoprotein reductase] + O2 = 19-oxo-androst-4-ene-3,17-dione + oxidized [NADPH--hemoprotein reductase] + 2 H2O + H(+). It carries out the reaction 19-oxo-androst-4-ene-3,17-dione + reduced [NADPH--hemoprotein reductase] + O2 = estrone + formate + oxidized [NADPH--hemoprotein reductase] + H2O + 2 H(+). The enzyme catalyses estrone + reduced [NADPH--hemoprotein reductase] + O2 = 2-hydroxyestrone + oxidized [NADPH--hemoprotein reductase] + H2O + H(+). It catalyses the reaction 17beta-hydroxy-5alpha-androstan-3-one + reduced [NADPH--hemoprotein reductase] + O2 = 17beta,19-dihydroxy-3-oxo-5alpha-androstanone + oxidized [NADPH--hemoprotein reductase] + H2O + H(+). The catalysed reaction is 17beta,19-dihydroxy-3-oxo-5alpha-androstanone + reduced [NADPH--hemoprotein reductase] + O2 = 17beta-hydroxy-3,19-dioxo-5alpha-androstanone + oxidized [NADPH--hemoprotein reductase] + 2 H2O + H(+). It carries out the reaction 17beta-hydroxy-3,19-dioxo-5alpha-androstanone + reduced [NADPH--hemoprotein reductase] + O2 = 17beta-hydroxy-3-oxo-19-nor-5alpha-androst-1-ene + formate + oxidized [NADPH--hemoprotein reductase] + H2O + 2 H(+). Its pathway is steroid hormone biosynthesis. Functionally, a cytochrome P450 monooxygenase that catalyzes the conversion of C19 androgens, androst-4-ene-3,17-dione (androstenedione) and testosterone to the C18 estrogens, estrone and estradiol, respectively. Catalyzes three successive oxidations of C19 androgens: two conventional oxidations at C19 yielding 19-hydroxy and 19-oxo/19-aldehyde derivatives, followed by a third oxidative aromatization step that involves C1-beta hydrogen abstraction combined with cleavage of the C10-C19 bond to yield a phenolic A ring and formic acid. Alternatively, the third oxidative reaction yields a 19-norsteroid and formic acid. Converts dihydrotestosterone to delta1,10-dehydro 19-nordihydrotestosterone and may play a role in homeostasis of this potent androgen. Also displays 2-hydroxylase activity toward estrone. Mechanistically, uses molecular oxygen inserting one oxygen atom into a substrate, and reducing the second into a water molecule, with two electrons provided by NADPH via cytochrome P450 reductase (CPR; NADPH-ferrihemoprotein reductase). This chain is Aromatase (CYP19A1), found in Leucopleurus acutus (Atlantic white-sided dolphin).